The following is a 264-amino-acid chain: tRNA pseudouridine synthase A (264 aa).

Asp56 serves as the catalytic Nucleophile. Tyr114 is a substrate binding site.

It belongs to the tRNA pseudouridine synthase TruA family. In terms of assembly, homodimer.

The enzyme catalyses uridine(38/39/40) in tRNA = pseudouridine(38/39/40) in tRNA. Functionally, formation of pseudouridine at positions 38, 39 and 40 in the anticodon stem and loop of transfer RNAs. This chain is tRNA pseudouridine synthase A, found in Buchnera aphidicola subsp. Baizongia pistaciae (strain Bp).